The following is a 561-amino-acid chain: Potassium-transporting ATPase potassium-binding subunit (561 aa).

The next 10 membrane-spanning stretches (helical) occupy residues 4 to 24, 65 to 85, 133 to 153, 177 to 197, 253 to 273, 285 to 305, 380 to 400, 417 to 437, 484 to 504, and 528 to 548; these read IVMQDAFFVVLLLVLAVPLGI, AVSVLAFSAVGFVFVMAVLML, IGLTVQNFVSAATGIAVLFAV, LYILLPLSLILALLLVSQGVV, FTNLIEMLAILLIPVALVVMF, AIMTAMMIVFVIGVVAITISE, GLYGMIGFIILTVFIAGLLVG, MVCLLILVPPLLTLFGTAVAV, MVGAVMMLLARFIPLVAALYL, and FIGLLIGVVVLVGALSFLPAL.

Belongs to the KdpA family. As to quaternary structure, the system is composed of three essential subunits: KdpA, KdpB and KdpC.

It is found in the cell membrane. Functionally, part of the high-affinity ATP-driven potassium transport (or Kdp) system, which catalyzes the hydrolysis of ATP coupled with the electrogenic transport of potassium into the cytoplasm. This subunit binds the extracellular potassium ions and delivers the ions to the membrane domain of KdpB through an intramembrane tunnel. In Listeria monocytogenes serotype 4b (strain F2365), this protein is Potassium-transporting ATPase potassium-binding subunit.